A 200-amino-acid polypeptide reads, in one-letter code: ATP-dependent Clp protease proteolytic subunit 2 (200 aa).

Serine 101 serves as the catalytic Nucleophile. Histidine 126 is an active-site residue.

It belongs to the peptidase S14 family. As to quaternary structure, fourteen ClpP subunits assemble into 2 heptameric rings which stack back to back to give a disk-like structure with a central cavity, resembling the structure of eukaryotic proteasomes.

It is found in the cytoplasm. It catalyses the reaction Hydrolysis of proteins to small peptides in the presence of ATP and magnesium. alpha-casein is the usual test substrate. In the absence of ATP, only oligopeptides shorter than five residues are hydrolyzed (such as succinyl-Leu-Tyr-|-NHMec, and Leu-Tyr-Leu-|-Tyr-Trp, in which cleavage of the -Tyr-|-Leu- and -Tyr-|-Trp bonds also occurs).. Cleaves peptides in various proteins in a process that requires ATP hydrolysis. Has a chymotrypsin-like activity. Plays a major role in the degradation of misfolded proteins. The chain is ATP-dependent Clp protease proteolytic subunit 2 from Prochlorococcus marinus (strain MIT 9313).